A 484-amino-acid chain; its full sequence is ATP-dependent rRNA helicase RRP3 (484 aa).

The segment covering 1–10 has biased composition (polar residues); sequence MAIVGSNSVS. Positions 1-61 are disordered; the sequence is MAIVGSNSVS…SSQKSKNIVE (61 aa). Residues 18-54 are compositionally biased toward basic and acidic residues; that stretch reads RNDARDLAEKIKRNALKKQEQDKKQQLEEESKPESSQ. The Q motif signature appears at 71-99; that stretch reads STFSELKLVPELLEAIQQMKFSKPTPIQS. The Helicase ATP-binding domain occupies 102–273; the sequence is IPHALEGKDI…RASLHNPVRV (172 aa). Residue 115–122 coordinates ATP; sequence AQTGSGKT. A DEAD box motif is present at residues 221–224; sequence DEAD. The 145-residue stretch at 300 to 444 folds into the Helicase C-terminal domain; it reads YLIHLLNEFV…KDPSPPKAML (145 aa). A disordered region spans residues 460-484; it reads RQTKEFHEKTRRGRRGKDDKDREEH. The span at 475–484 shows a compositional bias: basic and acidic residues; that stretch reads GKDDKDREEH.

Belongs to the DEAD box helicase family. DDX47/RRP3 subfamily. As to quaternary structure, interacts with the SSU processome.

The protein resides in the nucleus. It carries out the reaction ATP + H2O = ADP + phosphate + H(+). In terms of biological role, ATP-dependent rRNA helicase required for pre-ribosomal RNA processing. Involved in the maturation of the 35S-pre-rRNA and to its cleavage to mature 18S rRNA. The chain is ATP-dependent rRNA helicase RRP3 from Scheffersomyces stipitis (strain ATCC 58785 / CBS 6054 / NBRC 10063 / NRRL Y-11545) (Yeast).